Here is a 1050-residue protein sequence, read N- to C-terminus: Elongation factor 3 (1050 aa).

The ADP site is built by Val-43 and His-45. One copy of the HEAT 1 repeat lies at 46–83 (DVPVEFFEDLKKQIQSKDAKVSLAALDAYKHIASTNGL). An ADP-binding site is contributed by Ser-86. HEAT repeat units follow at residues 89–126 (PYVVDLVSEVAVKAGDKNKDVQTAASDALLAIASAITP), 127–165 (TAVKAILPKLIDNLTNTNKWTEKVAILRAVSQLVDTAKA), 169–206 (LRMPELIPVLSESMWDTKKEVKEAATATMTKSTETIDN), 208–244 (DIEKFIPQLISCIAKPTEVPETVHLLGATTFVSEVTM), 245–282 (ATLSIMAPLLSRGLAERDTAIKRKAAVIVDNMCKLVED), and 288–326 (PFMDKLLPGLKNNFANMADPEAREVTQRALNTLRRVGAV). ADP contacts are provided by Thr-395, His-399, and Glu-400. ABC transporter domains lie at 429–646 (DEGE…YYEL) and 672–998 (VKVS…KKDD). The ADP site is built by Asn-708, Glu-927, Asn-930, and His-956. The segment at 980 to 1050 (GHNWVQGQGS…DAYVSSDEEF (71 aa)) is disordered. A compositionally biased stretch (basic residues) spans 1013–1037 (AAKKKKKLSSAELRKKKKERMKKKK).

It belongs to the ABC transporter superfamily. ABCF family. EF3 subfamily. As to quaternary structure, monomer.

Its subcellular location is the cytoplasm. It catalyses the reaction ATP + H2O = ADP + phosphate + H(+). The protein operates within protein biosynthesis; polypeptide chain elongation. Ribosome-dependent ATPase that functions in cytoplasmic translation elongation. Required for the ATP-dependent release of deacylated tRNA from the ribosomal E-site during protein biosynthesis. Stimulates the eEF1A-dependent binding of aminoacyl-tRNA to the ribosomal A-site, which has reduced affinity for tRNA as long as the E-site is occupied. Assists translation termination by stimulating the release of nascent protein from the ribosome by release factors. The polypeptide is Elongation factor 3 (CEF3) (Candida albicans (strain SC5314 / ATCC MYA-2876) (Yeast)).